We begin with the raw amino-acid sequence, 221 residues long: Translation initiation factor 6 (221 aa).

Belongs to the eIF-6 family.

Binds to the 50S ribosomal subunit and prevents its association with the 30S ribosomal subunit to form the 70S initiation complex. This chain is Translation initiation factor 6, found in Methanocella arvoryzae (strain DSM 22066 / NBRC 105507 / MRE50).